The sequence spans 511 residues: Putative polyol transporter 1 (511 aa).

A run of 12 helical transmembrane segments spans residues 27–47, 63–83, 94–114, 124–144, 151–171, 186–206, 284–304, 324–344, 351–371, 384–404, 424–444, and 454–474; these read FACA…IGVM, VQLE…SGAA, YTIV…GFAT, FVAG…TAEV, GFLT…GYVS, FMLG…LAMP, ILIA…DAVV, LATV…TCVV, ALLL…GTSL, WAIG…SIGA, GASL…MTFL, and GAFL…FTFL.

It belongs to the major facilitator superfamily. Sugar transporter (TC 2.A.1.1) family.

Its subcellular location is the membrane. Functionally, plasma membrane sugar-proton symporter. The polypeptide is Putative polyol transporter 1 (PLT1) (Arabidopsis thaliana (Mouse-ear cress)).